The primary structure comprises 332 residues: Glycerol-3-phosphate dehydrogenase [NAD(P)+] (332 aa).

Positions 13, 34, and 108 each coordinate NADPH. Sn-glycerol 3-phosphate contacts are provided by Lys-108, Gly-136, and Ser-138. Ala-140 is a binding site for NADPH. 5 residues coordinate sn-glycerol 3-phosphate: Lys-191, Asp-244, Ser-254, Arg-255, and Asn-256. Residue Lys-191 is the Proton acceptor of the active site. Arg-255 serves as a coordination point for NADPH. Residues Val-279 and Glu-281 each coordinate NADPH.

This sequence belongs to the NAD-dependent glycerol-3-phosphate dehydrogenase family.

It localises to the cytoplasm. The enzyme catalyses sn-glycerol 3-phosphate + NAD(+) = dihydroxyacetone phosphate + NADH + H(+). It catalyses the reaction sn-glycerol 3-phosphate + NADP(+) = dihydroxyacetone phosphate + NADPH + H(+). It functions in the pathway membrane lipid metabolism; glycerophospholipid metabolism. In terms of biological role, catalyzes the reduction of the glycolytic intermediate dihydroxyacetone phosphate (DHAP) to sn-glycerol 3-phosphate (G3P), the key precursor for phospholipid synthesis. The chain is Glycerol-3-phosphate dehydrogenase [NAD(P)+] from Francisella tularensis subsp. tularensis (strain FSC 198).